The chain runs to 545 residues: Glucose-6-phosphate isomerase (545 aa).

Residue glutamate 351 is the Proton donor of the active site. Catalysis depends on residues histidine 382 and lysine 510.

It belongs to the GPI family.

It localises to the cytoplasm. The enzyme catalyses alpha-D-glucose 6-phosphate = beta-D-fructose 6-phosphate. The protein operates within carbohydrate biosynthesis; gluconeogenesis. It participates in carbohydrate degradation; glycolysis; D-glyceraldehyde 3-phosphate and glycerone phosphate from D-glucose: step 2/4. Its function is as follows. Catalyzes the reversible isomerization of glucose-6-phosphate to fructose-6-phosphate. This is Glucose-6-phosphate isomerase from Shewanella halifaxensis (strain HAW-EB4).